Reading from the N-terminus, the 257-residue chain is Phosphonates import ATP-binding protein PhnC (257 aa).

An ABC transporter domain is found at 2–246 (IEFRNVSKVY…KFAEIYGDVA (245 aa)). 35 to 42 (GLSGAGKS) contributes to the ATP binding site.

This sequence belongs to the ABC transporter superfamily. Phosphonates importer (TC 3.A.1.9.1) family. As to quaternary structure, the complex is composed of two ATP-binding proteins (PhnC), two transmembrane proteins (PhnE) and a solute-binding protein (PhnD).

It is found in the cell membrane. It carries out the reaction phosphonate(out) + ATP + H2O = phosphonate(in) + ADP + phosphate + H(+). Part of the ABC transporter complex PhnCDE involved in phosphonates import. Responsible for energy coupling to the transport system. This is Phosphonates import ATP-binding protein PhnC from Bacillus thuringiensis subsp. konkukian (strain 97-27).